A 391-amino-acid chain; its full sequence is Multidrug resistance protein MdtL (391 aa).

The next 12 helical transmembrane spans lie at 4-24 (FLICSFALVLLYPAGIDMYLV), 42-62 (IAFSVYLAGMAAAMLFAGKVA), 69-89 (PVAIPGAALFIIASVFCSLAE), 93-113 (LFLAGRFLQGLGAGCCYVVAF), 131-151 (LLNGITCIIPVLAPVLGHLIM), 158-178 (SLFWTMATMGIAVLMLSLFIL), 203-222 (FFLSRVVITTLSVSVILTFV), 245-265 (ALTAGVSMTVSFSTPFALGIF), 269-289 (TLMITSQVLFLAAGITLAVSP), 293-313 (VSLFGITLICAGFSVGFGVAM), 331-351 (LGIAQVCGSSLWIWLAAVVGI), and 356-376 (MLIGILIACSIVSLLLIMFVA).

The protein belongs to the major facilitator superfamily. DHA1 family. MdtL (TC 2.A.1.2.22) subfamily.

It localises to the cell inner membrane. Confers resistance to chloramphenicol. The polypeptide is Multidrug resistance protein MdtL (Escherichia coli (strain SMS-3-5 / SECEC)).